Consider the following 1207-residue polypeptide: DNA-directed RNA polymerase subunit beta' (1207 aa).

Zn(2+) is bound by residues Cys60, Cys62, Cys75, and Cys78. Residues Asp450, Asp452, and Asp454 each coordinate Mg(2+). The Zn(2+) site is built by Cys819, Cys893, Cys900, and Cys903.

The protein belongs to the RNA polymerase beta' chain family. The RNAP catalytic core consists of 2 alpha, 1 beta, 1 beta' and 1 omega subunit. When a sigma factor is associated with the core the holoenzyme is formed, which can initiate transcription. The cofactor is Mg(2+). Zn(2+) is required as a cofactor.

It carries out the reaction RNA(n) + a ribonucleoside 5'-triphosphate = RNA(n+1) + diphosphate. In terms of biological role, DNA-dependent RNA polymerase catalyzes the transcription of DNA into RNA using the four ribonucleoside triphosphates as substrates. The sequence is that of DNA-directed RNA polymerase subunit beta' from Streptococcus pyogenes serotype M12 (strain MGAS2096).